The following is a 188-amino-acid chain: Elongation factor P (188 aa).

Belongs to the elongation factor P family.

It localises to the cytoplasm. Its pathway is protein biosynthesis; polypeptide chain elongation. Involved in peptide bond synthesis. Stimulates efficient translation and peptide-bond synthesis on native or reconstituted 70S ribosomes in vitro. Probably functions indirectly by altering the affinity of the ribosome for aminoacyl-tRNA, thus increasing their reactivity as acceptors for peptidyl transferase. The protein is Elongation factor P of Bdellovibrio bacteriovorus (strain ATCC 15356 / DSM 50701 / NCIMB 9529 / HD100).